The sequence spans 287 residues: Urease accessory protein UreD (287 aa).

Belongs to the UreD family. In terms of assembly, ureD, UreF and UreG form a complex that acts as a GTP-hydrolysis-dependent molecular chaperone, activating the urease apoprotein by helping to assemble the nickel containing metallocenter of UreC. The UreE protein probably delivers the nickel.

Its subcellular location is the cytoplasm. Functionally, required for maturation of urease via the functional incorporation of the urease nickel metallocenter. This is Urease accessory protein UreD from Aliivibrio fischeri (strain MJ11) (Vibrio fischeri).